The following is a 28-amino-acid chain: Conotoxin Cal6.43b (28 aa).

3 disulfides stabilise this stretch: cysteine 3–cysteine 13, cysteine 7–cysteine 19, and cysteine 12–cysteine 25.

Expressed by the venom duct.

The protein resides in the secreted. Functionally, probable neurotoxin with unknown target. Possibly targets ion channels. In Californiconus californicus (California cone), this protein is Conotoxin Cal6.43b.